The sequence spans 707 residues: Ribosomal RNA large subunit methyltransferase K/L (707 aa).

The 112-residue stretch at 44-155 folds into the THUMP domain; sequence VIYNLCLWSR…NDILTVSFDL (112 aa).

It belongs to the methyltransferase superfamily. RlmKL family.

The protein localises to the cytoplasm. The catalysed reaction is guanosine(2445) in 23S rRNA + S-adenosyl-L-methionine = N(2)-methylguanosine(2445) in 23S rRNA + S-adenosyl-L-homocysteine + H(+). The enzyme catalyses guanosine(2069) in 23S rRNA + S-adenosyl-L-methionine = N(2)-methylguanosine(2069) in 23S rRNA + S-adenosyl-L-homocysteine + H(+). Specifically methylates the guanine in position 2445 (m2G2445) and the guanine in position 2069 (m7G2069) of 23S rRNA. The polypeptide is Ribosomal RNA large subunit methyltransferase K/L (Legionella pneumophila (strain Paris)).